A 198-amino-acid polypeptide reads, in one-letter code: Recombination protein RecR (198 aa).

The C4-type zinc finger occupies 57–72; that stretch reads CSVCGHITEEDPCYIC. The Toprim domain occupies 80–175; it reads SVICVVEDDK…KVTRLAQGLS (96 aa).

It belongs to the RecR family.

Functionally, may play a role in DNA repair. It seems to be involved in an RecBC-independent recombinational process of DNA repair. It may act with RecF and RecO. This is Recombination protein RecR from Staphylococcus carnosus (strain TM300).